Reading from the N-terminus, the 102-residue chain is Large ribosomal subunit protein bL21 (102 aa).

The protein belongs to the bacterial ribosomal protein bL21 family. As to quaternary structure, part of the 50S ribosomal subunit. Contacts protein L20.

In terms of biological role, this protein binds to 23S rRNA in the presence of protein L20. The polypeptide is Large ribosomal subunit protein bL21 (Geobacter sulfurreducens (strain ATCC 51573 / DSM 12127 / PCA)).